The chain runs to 236 residues: Large ribosomal subunit protein uL3 (236 aa).

This sequence belongs to the universal ribosomal protein uL3 family. As to quaternary structure, part of the 50S ribosomal subunit. Forms a cluster with proteins L14 and L19.

Functionally, one of the primary rRNA binding proteins, it binds directly near the 3'-end of the 23S rRNA, where it nucleates assembly of the 50S subunit. This Anaeromyxobacter dehalogenans (strain 2CP-C) protein is Large ribosomal subunit protein uL3.